Here is a 550-residue protein sequence, read N- to C-terminus: Metal transporter Nramp3 (550 aa).

Over residues 1 to 26 (MSGPMQRSSQPQFISSVERNNQSNGP) the composition is skewed to polar residues. The tract at residues 1–30 (MSGPMQRSSQPQFISSVERNNQSNGPGTPL) is disordered. Helical transmembrane passes span 50 to 70 (LFSY…PGNF), 83 to 103 (ELLW…SLAA), 127 to 147 (FILW…EVIG), 158 to 178 (IPVW…LLLQ), 185 to 205 (LEFL…VELG), 233 to 253 (ISLL…ALVL), 276 to 296 (AFAL…SGAV), 333 to 353 (LFAV…TYAG), 368 to 390 (WIRN…IIGG), 397 to 417 (LIII…VPLL), 435 to 455 (ISVI…YFLI), and 473 to 493 (VFSG…ILYL). The disordered stretch occupies residues 523-550 (GEGSLGHLPREDISSMQLPQQRTASDLD). The segment covering 536–550 (SSMQLPQQRTASDLD) has biased composition (polar residues).

The protein belongs to the NRAMP (TC 2.A.55) family.

The protein resides in the membrane. Functionally, probable metal transporter. The chain is Metal transporter Nramp3 (NRAMP3) from Oryza sativa subsp. japonica (Rice).